Reading from the N-terminus, the 367-residue chain is ADP-ribosylhydrolase ARH3 (367 aa).

Glu41, Thr79, Asp80, and Asp81 together coordinate Mg(2+). Asp80 is a substrate binding site. Residues 149 to 155, His185, Leu238, and Ile274 each bind substrate; that span reads KGSYGNG. Asp317 and Thr320 together coordinate Mg(2+).

This sequence belongs to the ADP-ribosylglycohydrolase family. Monomer. The cofactor is Mg(2+).

Its subcellular location is the nucleus. The protein resides in the cytoplasm. The protein localises to the chromosome. It localises to the mitochondrion matrix. The enzyme catalyses [(1''-&gt;2')-ADP-alpha-D-ribose](n) + H2O = [(1''-&gt;2')-ADP-alpha-D-ribose](n-1) + ADP-D-ribose. It catalyses the reaction 1''-O-acetyl-ADP-alpha-D-ribose + H2O = ADP-D-ribose + acetate + H(+). It carries out the reaction O-(ADP-D-ribosyl)-L-seryl-[protein] + H2O = ADP-D-ribose + L-seryl-[protein]. The catalysed reaction is alpha-NAD(+) + H2O = ADP-D-ribose + nicotinamide + H(+). Its activity is regulated as follows. The protein undergoes a dramatic conformational switch from closed to open states upon substrate-binding, which enables specific substrate recognition for the 1''-O-linkage. The glutamate flap (Glu-41) blocks substrate entrance to Mg(2+) in the unliganded closed state. In presence of substrate, Glu-41 is ejected from the active site: this closed-to-open transition significantly widens the substrate-binding channel and precisely positions the scissile 1''-O-linkage for cleavage while securing tightly 2'- and 3'-hydroxyls of ADP-ribose. Functionally, ADP-ribosylhydrolase that preferentially hydrolyzes the scissile alpha-O-linkage attached to the anomeric C1'' position of ADP-ribose and acts on different substrates, such as proteins ADP-ribosylated on serine and threonine, free poly(ADP-ribose) and O-acetyl-ADP-D-ribose. Specifically acts as a serine mono-ADP-ribosylhydrolase by mediating the removal of mono-ADP-ribose attached to serine residues on proteins, thereby playing a key role in DNA damage response. Serine ADP-ribosylation of proteins constitutes the primary form of ADP-ribosylation of proteins in response to DNA damage. Does not hydrolyze ADP-ribosyl-arginine, -cysteine, -diphthamide, or -asparagine bonds. Also able to degrade protein free poly(ADP-ribose), which is synthesized in response to DNA damage: free poly(ADP-ribose) acts as a potent cell death signal and its degradation by ADPRHL2 protects cells from poly(ADP-ribose)-dependent cell death, a process named parthanatos. Also hydrolyzes free poly(ADP-ribose) in mitochondria. Specifically digests O-acetyl-ADP-D-ribose, a product of deacetylation reactions catalyzed by sirtuins. Specifically degrades 1''-O-acetyl-ADP-D-ribose isomer, rather than 2''-O-acetyl-ADP-D-ribose or 3''-O-acetyl-ADP-D-ribose isomers. The chain is ADP-ribosylhydrolase ARH3 (ADPRS) from Gallus gallus (Chicken).